Here is a 22-residue protein sequence, read N- to C-terminus: 5-methyltetrahydropteroyltriglutamate--homocysteine methyltransferase (22 aa).

This sequence belongs to the vitamin-B12 independent methionine synthase family. Requires Zn(2+) as cofactor.

The protein resides in the cytoplasm. The catalysed reaction is 5-methyltetrahydropteroyltri-L-glutamate + L-homocysteine = tetrahydropteroyltri-L-glutamate + L-methionine. The protein operates within amino-acid biosynthesis; L-methionine biosynthesis via de novo pathway; L-methionine from L-homocysteine (MetE route): step 1/1. Functionally, catalyzes the transfer of a methyl group from 5-methyltetrahydrofolate to homocysteine resulting in methionine formation. The polypeptide is 5-methyltetrahydropteroyltriglutamate--homocysteine methyltransferase (Pseudotsuga menziesii (Douglas-fir)).